The sequence spans 211 residues: MREFCPLIGVIGRSGAGKNVVSRLLAERGCYCIDADARTRELLESYGDSIVERFQVAAAARGLSLRRKDGGLHSAHLGVLLFSEPKLLQQHEEFLLPKVTRLLCEDIARAQAARPKAIVLNAPTLHKTELLQACSFVLYIWAPSILRMWRCKKRERVSFTHLLRRFSAQKGFYAQSIAQNADTYTVANCGRVASLARKVDCILTRRGVLGE.

The DPCK domain occupies Leu7–Glu211. Residue Gly15–Val20 participates in ATP binding.

This sequence belongs to the CoaE family.

The protein localises to the cytoplasm. It catalyses the reaction 3'-dephospho-CoA + ATP = ADP + CoA + H(+). Its pathway is cofactor biosynthesis; coenzyme A biosynthesis; CoA from (R)-pantothenate: step 5/5. Functionally, catalyzes the phosphorylation of the 3'-hydroxyl group of dephosphocoenzyme A to form coenzyme A. The chain is Dephospho-CoA kinase from Treponema pallidum (strain Nichols).